A 215-amino-acid polypeptide reads, in one-letter code: Large ribosomal subunit protein uL16m (215 aa).

The transit peptide at 1–36 directs the protein to the mitochondrion; the sequence is MALQQYNKFPFFFSGILGPTRLNGLQMPPIQTMVRW.

This sequence belongs to the universal ribosomal protein uL16 family. In terms of assembly, component of the mitochondrial large ribosomal subunit (mt-LSU). Mature yeast 74S mitochondrial ribosomes consist of a small (37S) and a large (54S) subunit. The 37S small subunit contains a 15S ribosomal RNA (15S mt-rRNA) and at least 32 different proteins. The 54S large subunit contains a 21S rRNA (21S mt-rRNA) and at least 45 different proteins.

It is found in the mitochondrion. Its function is as follows. Component of the mitochondrial ribosome (mitoribosome), a dedicated translation machinery responsible for the synthesis of mitochondrial genome-encoded proteins, including at least some of the essential transmembrane subunits of the mitochondrial respiratory chain. The mitoribosomes are attached to the mitochondrial inner membrane and translation products are cotranslationally integrated into the membrane. The chain is Large ribosomal subunit protein uL16m (mrpl16) from Schizosaccharomyces pombe (strain 972 / ATCC 24843) (Fission yeast).